The sequence spans 496 residues: Lysine--tRNA ligase (496 aa).

Mg(2+) is bound by residues Glu409 and Glu416.

This sequence belongs to the class-II aminoacyl-tRNA synthetase family. Homodimer. The cofactor is Mg(2+).

Its subcellular location is the cytoplasm. It carries out the reaction tRNA(Lys) + L-lysine + ATP = L-lysyl-tRNA(Lys) + AMP + diphosphate. The sequence is that of Lysine--tRNA ligase from Streptococcus gordonii (strain Challis / ATCC 35105 / BCRC 15272 / CH1 / DL1 / V288).